Reading from the N-terminus, the 653-residue chain is Protein CBFA2T3 (653 aa).

Basic and acidic residues predominate over residues 1–10; that stretch reads MPASRLRDRA. The segment at 1 to 109 is disordered; sequence MPASRLRDRA…HTHREDGPAT (109 aa). Residues 1-127 are required for nucleolar targeting (in isoform 1); it reads MPASRLRDRA…CLKWSMVCLL (127 aa). The interval 1–430 is mediates interaction with PDE7A (in isoform 2); the sequence is MPASRLRDRA…RRCQEADREE (430 aa). The tract at residues 1-435 is mediates localization to the nucleus; that stretch reads MPASRLRDRA…ADREELNHWA (435 aa). Positions 11 to 23 are enriched in low complexity; the sequence is ASSASGSTCGSMS. Residues 75–86 show a composition bias toward pro residues; sequence STPPSMPPPPPA. An interaction with ZBTB33 region spans residues 145-242; it reads PNGFSNGPAT…IPFLKANLPL (98 aa). One can recognise a TAFH domain in the interval 171-266; it reads ARQLSKLKRF…TPAQYLAQHE (96 aa). The interaction with HIF1A stretch occupies residues 176–268; that stretch reads KLKRFLTTLQ…AQYLAQHEQL (93 aa). Positions 284–342 are disordered; sequence LLEVNENGKRRTPDRTKENGSDRDPLHPEHLSKRPCTLNPAQRYSPSNGPPQPTPPPHY. The segment covering 289-315 has biased composition (basic and acidic residues); that stretch reads ENGKRRTPDRTKENGSDRDPLHPEHLS. Residues 331 to 341 show a composition bias toward pro residues; that stretch reads NGPPQPTPPPH. A nervy homology region 2 (NHR2); essential for down-regulation of PFKFB3, PFKFB4 and PDK1 expression region spans residues 394-412; sequence EEWKHLNNLLNCIMDMVEK. The span at 434 to 446 shows a compositional bias: basic and acidic residues; sequence WARRYSDAEDTKK. The tract at residues 434-472 is disordered; it reads WARRYSDAEDTKKGPAPAAARPRSSSAGPEGPQLDVPRE. The span at 447-462 shows a compositional bias: low complexity; it reads GPAPAAARPRSSSAGP. Residues S457 and S459 each carry the phosphoserine modification. At T479 the chain carries Phosphothreonine. A mediates interaction with PRKAR2A region spans residues 485–506; that stretch reads DIWRKAEEAVNEVKRQAMSELQ. The interval 485–533 is nervy homology region 3 (NHR3); essential for down-regulation of PFKFB3, PFKFB4 and PDK1 expression; the sequence is DIWRKAEEAVNEVKRQAMSELQKAVSDAERKAHELITTERAKMERALAE. Residues 488 to 543 are a coiled coil; it reads RKAEEAVNEVKRQAMSELQKAVSDAERKAHELITTERAKMERALAEAKRQASEDAL. Zn(2+)-binding residues include C556, C559, C567, C570, C576, C580, H588, and C592. The MYND-type zinc finger occupies 556–592; sequence CWNCGRKASETCSGCNAARYCGSFCQHRDWEKHHHVC. The segment at 603–653 is disordered; it reads VADPVPGPPEAAHSLGPSLPVGAASPSEAGSAGPSRPGSPSPPGPLDTVPR. A compositionally biased stretch (low complexity) spans 622–638; it reads PVGAASPSEAGSAGPSR. S637 and S641 each carry phosphoserine. Residue T650 is modified to Phosphothreonine.

Belongs to the CBFA2T family. In terms of assembly, homooligomer. Homotetramerization is mediated by nervy homology region 2 (NRH2). Can interact with RUNX1T1 and CBFA2T2; heterotetramerization between members of the CBFA2T family is proposed. Component of a TAL-1 complex composed at least of CBFA2T3, LDB1, TAL1 and TCF3. Interacts with ERBB4, HDAC1, HDAC2, HDAC3, HDAC6, HDAC8, NCOR1, NCOR2, and ZNF652. According to PubMed:12242670, may not interact with HDAC6. Interacts with PLXNA1, PLXNA3 and PRKAR1A. Isoform 2 interacts with PRKAR2A, PDE7A and probably PDE4A. Interacts with ZBTB4, ZBTB38 and ZBTB33. Interacts with HIF1A and EGLN1. Interacts with the AML1-MTG8/ETO fusion protein. As to expression, widely expressed with higher expression in heart, pancreas, skeletal muscle, spleen, thymus and peripheral blood leukocytes. Expressed in hematopoietic cells (at protein level).

The protein resides in the nucleus. The protein localises to the nucleolus. Its subcellular location is the nucleoplasm. It is found in the golgi apparatus membrane. In terms of biological role, transcriptional corepressor which facilitates transcriptional repression via its association with DNA-binding transcription factors and recruitment of other corepressors and histone-modifying enzymes. Can repress the expression of MMP7 in a ZBTB33-dependent manner. Reduces the protein levels and stability of the transcriptinal regulator HIF1A; interacts with EGLN1 and promotes the HIF1A prolyl hydroxylation-dependent ubiquitination and proteasomal degradation pathway. Contributes to inhibition of glycolysis and stimulation of mitochondrial respiration by down-regulating the expression of glycolytic genes including PFKFB3, PFKFB4, PDK1, PFKP, LDHA and HK1 which are direct targets of HIF1A. Regulates the proliferation and the differentiation of erythroid progenitors by repressing the expression of TAL1 target genes. Plays a role in granulocyte differentiation. Its function is as follows. Isoform 2 functions as an A-kinase-anchoring protein. The polypeptide is Protein CBFA2T3 (CBFA2T3) (Homo sapiens (Human)).